Reading from the N-terminus, the 169-residue chain is Ribosomal RNA large subunit methyltransferase H (169 aa).

Residues leucine 85, glycine 117, and 136 to 141 contribute to the S-adenosyl-L-methionine site; that span reads LGELTW.

It belongs to the RNA methyltransferase RlmH family. In terms of assembly, homodimer.

The protein resides in the cytoplasm. The catalysed reaction is pseudouridine(1915) in 23S rRNA + S-adenosyl-L-methionine = N(3)-methylpseudouridine(1915) in 23S rRNA + S-adenosyl-L-homocysteine + H(+). In terms of biological role, specifically methylates the pseudouridine at position 1915 (m3Psi1915) in 23S rRNA. This Brucella ovis (strain ATCC 25840 / 63/290 / NCTC 10512) protein is Ribosomal RNA large subunit methyltransferase H.